Reading from the N-terminus, the 396-residue chain is Elongation factor Tu 2 (396 aa).

The region spanning 10–206 is the tr-type G domain; that stretch reads KPHCNIGTIG…TVDAYIPQPD (197 aa). Positions 19–26 are G1; it reads GHVDHGKT. 19–26 is a GTP binding site; it reads GHVDHGKT. A Mg(2+)-binding site is contributed by Thr-26. Positions 60 to 64 are G2; that stretch reads GITIN. Positions 81 to 84 are G3; it reads DCPG. Residues 81 to 85 and 136 to 139 contribute to the GTP site; these read DCPGH and NKVD. The segment at 136–139 is G4; sequence NKVD. A G5 region spans residues 174 to 176; the sequence is SAK.

It belongs to the TRAFAC class translation factor GTPase superfamily. Classic translation factor GTPase family. EF-Tu/EF-1A subfamily. As to quaternary structure, monomer.

The protein localises to the cytoplasm. It catalyses the reaction GTP + H2O = GDP + phosphate + H(+). Functionally, GTP hydrolase that promotes the GTP-dependent binding of aminoacyl-tRNA to the A-site of ribosomes during protein biosynthesis. The polypeptide is Elongation factor Tu 2 (Caulobacter sp. (strain K31)).